The primary structure comprises 1191 residues: Puratrophin-1 (1191 aa).

Disordered regions lie at residues 1-152 (MERP…DPVG) and 707-728 (AGGG…SDPR). Ser-64 carries the phosphoserine modification. Polar residues predominate over residues 111–120 (SHLSLAQGES). The DH domain maps to 732–908 (RLQLVLAEMV…HFQLRHGNDL (177 aa)). Residues 920–1027 (NLKEQGQLVR…WTADISHLLW (108 aa)) enclose the PH domain. The disordered stretch occupies residues 1150–1176 (SLTAEDSEISSQCPSASGSSGSDSSCV). Over residues 1159–1176 (SSQCPSASGSSGSDSSCV) the composition is skewed to low complexity.

Expressed in kidney, Leydig cells in the testis, epithelial cells in the prostate gland and Langerhans islet in the pancreas. Isoform 1 and isoform 3 are strongly expressed in Purkinje cells and to a lower extent in other neurons (at protein level). Widely expressed at low levels. More strongly expressed in testis and pancreas.

Functionally, possible role in intracellular signaling and cytoskeleton dynamics at the Golgi. This is Puratrophin-1 (PLEKHG4) from Homo sapiens (Human).